Reading from the N-terminus, the 397-residue chain is MQLEHLPEEFEMARPVLQTIEQAGYEAYFVGGSVRDTILGKEIHDVDIATSAYPDEIKHLFKRTVDTGIEHGTVMILDHGTGYETTTFRSESTYTDFRRPDQVTFVRSLAEDLKRRDFTINALAMKEDGTVIDLFDGLADLKHRQIRAVGDPQERFHEDALRMMRAVRFASQLNFTIVPETLAAMTSHAELLRKIAVERTQVELLKLLTGQAPQQGLTDLLTTGLWQYCPDFADHKVDLERLTAQLHQGASTDLTAWTLLTTSFGLETNAITTFLKHWKTANQTISAVQMTTKMAQHLLQGSLSTWQVYQCGEDQLMIANEAAVVLGATDRSRELVAQWQNLPIQTKKALAVTGRDLMQAGVQPGPQLGAILGDLEYQVVTGKLPNEKPALVAAVTD.

ATP contacts are provided by G32 and R35. Residues G32 and R35 each contribute to the CTP site. D45 and D47 together coordinate Mg(2+). ATP-binding residues include R116, D159, R162, R165, and R168. CTP is bound by residues R116, D159, R162, R165, and R168.

The protein belongs to the tRNA nucleotidyltransferase/poly(A) polymerase family. Bacterial CCA-adding enzyme type 3 subfamily. In terms of assembly, homodimer. The cofactor is Mg(2+).

The catalysed reaction is a tRNA precursor + 2 CTP + ATP = a tRNA with a 3' CCA end + 3 diphosphate. It carries out the reaction a tRNA with a 3' CCA end + 2 CTP + ATP = a tRNA with a 3' CCACCA end + 3 diphosphate. Catalyzes the addition and repair of the essential 3'-terminal CCA sequence in tRNAs without using a nucleic acid template. Adds these three nucleotides in the order of C, C, and A to the tRNA nucleotide-73, using CTP and ATP as substrates and producing inorganic pyrophosphate. tRNA 3'-terminal CCA addition is required both for tRNA processing and repair. Also involved in tRNA surveillance by mediating tandem CCA addition to generate a CCACCA at the 3' terminus of unstable tRNAs. While stable tRNAs receive only 3'-terminal CCA, unstable tRNAs are marked with CCACCA and rapidly degraded. In Levilactobacillus brevis (strain ATCC 367 / BCRC 12310 / CIP 105137 / JCM 1170 / LMG 11437 / NCIMB 947 / NCTC 947) (Lactobacillus brevis), this protein is CCA-adding enzyme.